We begin with the raw amino-acid sequence, 847 residues long: FAST kinase domain-containing protein 1, mitochondrial (847 aa).

Position 360 is an N6-acetyllysine (lysine 360). Positions 777-837 (IALEFLDSKA…KDARMDYLRE (61 aa)) constitute an RAP domain.

The protein belongs to the FAST kinase family. Expression detected in spleen, thymus, testis, ovary, colon, heart, smooth muscle, kidney, brain, lung, liver and white adipose tissue with highest expression in heart.

The protein localises to the mitochondrion. Involved in the down-regulation of mitochondrial MT-ND3 mRNA levels which leads to decreased respiratory complex I abundance and activity. In Homo sapiens (Human), this protein is FAST kinase domain-containing protein 1, mitochondrial (FASTKD1).